The following is a 688-amino-acid chain: Elongation factor G (688 aa).

The tr-type G domain maps to 8 to 282 (KNFRNFGIMA…AVVDFLPSPV (275 aa)). Residues 17 to 24 (AHIDAGKT), 81 to 85 (DTPGH), and 135 to 138 (NKMD) contribute to the GTP site.

The protein belongs to the TRAFAC class translation factor GTPase superfamily. Classic translation factor GTPase family. EF-G/EF-2 subfamily.

The protein resides in the cytoplasm. Catalyzes the GTP-dependent ribosomal translocation step during translation elongation. During this step, the ribosome changes from the pre-translocational (PRE) to the post-translocational (POST) state as the newly formed A-site-bound peptidyl-tRNA and P-site-bound deacylated tRNA move to the P and E sites, respectively. Catalyzes the coordinated movement of the two tRNA molecules, the mRNA and conformational changes in the ribosome. This is Elongation factor G (fusA) from Mycoplasma genitalium (strain ATCC 33530 / DSM 19775 / NCTC 10195 / G37) (Mycoplasmoides genitalium).